The primary structure comprises 148 residues: Putative carbonic anhydrase (148 aa).

The region spanning 1–146 (CLKRLQPGEM…LNGRTVFEVH (146 aa)) is the Alpha-carbonic anhydrase domain.

The protein belongs to the alpha-carbonic anhydrase family. Zn(2+) is required as a cofactor. In terms of tissue distribution, component of the acid-insoluble organic matrix of the aragonitic skeleton (at protein level).

It is found in the secreted. The enzyme catalyses hydrogencarbonate + H(+) = CO2 + H2O. In terms of biological role, reversible hydration of carbon dioxide. In Acropora millepora (Staghorn coral), this protein is Putative carbonic anhydrase.